The chain runs to 1023 residues: StAR-related lipid transfer protein 8 (1023 aa).

Disordered regions lie at residues 46–67 and 82–161; these read PMGS…SSCE and TVSL…KVSK. Residues 99–114 show a composition bias toward polar residues; the sequence is PSSSDRPLLSPTQGQE. Ser-108 carries the phosphoserine modification. Positions 120-130 are enriched in basic residues; that stretch reads AKKRHRNRSFL. A compositionally biased stretch (polar residues) spans 143 to 161; it reads GSQQAEPKHSPATSEKVSK. Arg-169 bears the Asymmetric dimethylarginine mark. A phosphoserine mark is found at Ser-235 and Ser-238. The segment covering 387–397 has biased composition (low complexity); that stretch reads PAQAPAEAEPV. Disordered stretches follow at residues 387 to 461 and 467 to 486; these read PAQA…MNEA and LAGL…VGAS. The span at 441–459 shows a compositional bias: polar residues; the sequence is ISDTVASSSELDSSGNSMN. Phosphoserine is present on residues Ser-498 and Ser-506. The Rho-GAP domain occupies 573–777; it reads PPLIHVQRTG…HMISDCKKLF (205 aa). The tract at residues 733 to 757 is disordered; that stretch reads KKDSPSPRIKSKRSLIGRPGPRDLS. The START domain occupies 809-1017; it reads AQAAGVSLSL…RDSFPTLQAA (209 aa).

Binds both the SH2 and PTB domains of TNS1. Widely expressed with highest levels in kidney, lung and placenta.

It localises to the cell junction. It is found in the focal adhesion. In terms of biological role, accelerates GTPase activity of RHOA and CDC42, but not RAC1. Stimulates the hydrolysis of phosphatidylinositol 4,5-bisphosphate by PLCD1. In Homo sapiens (Human), this protein is StAR-related lipid transfer protein 8 (STARD8).